A 139-amino-acid polypeptide reads, in one-letter code: Large ribosomal subunit protein uL16 (139 aa).

This sequence belongs to the universal ribosomal protein uL16 family. In terms of assembly, part of the 50S ribosomal subunit.

Functionally, binds 23S rRNA and is also seen to make contacts with the A and possibly P site tRNAs. This chain is Large ribosomal subunit protein uL16, found in Protochlamydia amoebophila (strain UWE25).